The sequence spans 273 residues: Dermonecrotic toxin LsaSicTox-alphaIB1avi (273 aa).

Residue His-5 is part of the active site. Positions 25 and 27 each coordinate Mg(2+). The active-site Nucleophile is the His-41. Cystine bridges form between Cys-45–Cys-51 and Cys-47–Cys-190. Asp-85 is a Mg(2+) binding site.

Belongs to the arthropod phospholipase D family. Class II subfamily. Mg(2+) is required as a cofactor. Expressed by the venom gland.

It is found in the secreted. It carries out the reaction an N-(acyl)-sphingosylphosphocholine = an N-(acyl)-sphingosyl-1,3-cyclic phosphate + choline. The enzyme catalyses an N-(acyl)-sphingosylphosphoethanolamine = an N-(acyl)-sphingosyl-1,3-cyclic phosphate + ethanolamine. The catalysed reaction is a 1-acyl-sn-glycero-3-phosphocholine = a 1-acyl-sn-glycero-2,3-cyclic phosphate + choline. It catalyses the reaction a 1-acyl-sn-glycero-3-phosphoethanolamine = a 1-acyl-sn-glycero-2,3-cyclic phosphate + ethanolamine. Dermonecrotic toxins cleave the phosphodiester linkage between the phosphate and headgroup of certain phospholipids (sphingolipid and lysolipid substrates), forming an alcohol (often choline) and a cyclic phosphate. This toxin acts on sphingomyelin (SM). It may also act on ceramide phosphoethanolamine (CPE), lysophosphatidylcholine (LPC) and lysophosphatidylethanolamine (LPE), but not on lysophosphatidylserine (LPS), and lysophosphatidylglycerol (LPG). It acts by transphosphatidylation, releasing exclusively cyclic phosphate products as second products. Induces dermonecrosis, hemolysis, increased vascular permeability, edema, inflammatory response, and platelet aggregation. The chain is Dermonecrotic toxin LsaSicTox-alphaIB1avi from Loxosceles sabina (Tucson recluse spider).